Here is a 590-residue protein sequence, read N- to C-terminus: Aspartate--tRNA(Asp/Asn) ligase (590 aa).

Glu-176 serves as a coordination point for L-aspartate. The aspartate stretch occupies residues 200–203; it reads QLFK. L-aspartate is bound by residues Arg-222 and His-451. 222–224 contacts ATP; sequence RDE. Glu-485 contributes to the ATP binding site. Arg-492 contacts L-aspartate. Position 537-540 (537-540) interacts with ATP; the sequence is GIDR.

Belongs to the class-II aminoacyl-tRNA synthetase family. Type 1 subfamily. In terms of assembly, homodimer.

It is found in the cytoplasm. It catalyses the reaction tRNA(Asx) + L-aspartate + ATP = L-aspartyl-tRNA(Asx) + AMP + diphosphate. Aspartyl-tRNA synthetase with relaxed tRNA specificity since it is able to aspartylate not only its cognate tRNA(Asp) but also tRNA(Asn). Reaction proceeds in two steps: L-aspartate is first activated by ATP to form Asp-AMP and then transferred to the acceptor end of tRNA(Asp/Asn). The protein is Aspartate--tRNA(Asp/Asn) ligase of Ehrlichia ruminantium (strain Gardel).